The following is a 215-amino-acid chain: MNQSILSPFGNTAEERVLNAINAFKNGNGVLVLDDEDRENEGDLIFPAETITPEQMAKLIRYGSGIVCLCITDERCQQLDLPSMVEHNNSVNKTAFTVTIEAAKGVSTGVSAADRVTTIQTAIADNAVPTDLHRPGHVFPLRAANGGVLTRRGHTEASVDLARLAGFKEAGVICEITNDDGTMARTPDIVEFAKKFGYSVLTIEDLVEYRLAHNI.

Residues 38–39 (RE), D43, 151–155 (RRGHT), and E175 contribute to the D-ribulose 5-phosphate site. A Mg(2+)-binding site is contributed by E39. Residue H154 participates in Mg(2+) binding.

It belongs to the DHBP synthase family. In terms of assembly, homodimer. The cofactor is Mg(2+). Mn(2+) is required as a cofactor.

It catalyses the reaction D-ribulose 5-phosphate = (2S)-2-hydroxy-3-oxobutyl phosphate + formate + H(+). Its pathway is cofactor biosynthesis; riboflavin biosynthesis; 2-hydroxy-3-oxobutyl phosphate from D-ribulose 5-phosphate: step 1/1. Its function is as follows. Catalyzes the conversion of D-ribulose 5-phosphate to formate and 3,4-dihydroxy-2-butanone 4-phosphate. The protein is 3,4-dihydroxy-2-butanone 4-phosphate synthase of Haemophilus influenzae (strain PittEE).